A 112-amino-acid polypeptide reads, in one-letter code: Divalent-cation tolerance protein CutA (112 aa).

C16, H83, and H84 together coordinate Cu cation.

It belongs to the CutA family. As to quaternary structure, homotrimer. Requires Cu cation as cofactor.

It localises to the cytoplasm. Functionally, involved in resistance toward heavy metals. The protein is Divalent-cation tolerance protein CutA of Shigella boydii serotype 18 (strain CDC 3083-94 / BS512).